Consider the following 375-residue polypeptide: MSNTIAYFDITIANEPAGRLTFELFDDVVPKTANNFKHLCIGDKTNEAGVKLAYAGSSFHRCIKGFMLQGGDFTRGDGTGGESIYGEKFEDENFELKHDKPMLLSMANAGPGTNGSQFFITTVPTPHLDGKHVVFGRVIYNRSLVRRIENIPTTSDRPDQEVTISSAGVLSPDEFAQLEAERQAKQAGSDGGDIWEDWPQDEEGVDAEKPEEALVVAGKLKEVGTKEFKAGNFAVALDKYQKALRYLDVHPVLPNDSPAELVESFRSLRLPLLTNAALCALKLPASPNTSSLVVSLTSRALTLPNLSASEKGKALYRRAQAYVLKKDDEAAEKDLKGALECVPGDAGVIKLLKDVEAKRKARREKERQAFAKMFG.

Residues 7 to 169 form the PPIase cyclophilin-type domain; the sequence is YFDITIANEP…QEVTISSAGV (163 aa). TPR repeat units follow at residues 217 to 250, 270 to 307, and 312 to 345; these read AGKLKEVGTKEFKAGNFAVALDKYQKALRYLDVH, LPLLTNAALCALKLPASPNTSSLVVSLTSRALTLPNLS, and GKALYRRAQAYVLKKDDEAAEKDLKGALECVPGD.

Belongs to the cyclophilin-type PPIase family. PPIase D subfamily.

It localises to the cytoplasm. It catalyses the reaction [protein]-peptidylproline (omega=180) = [protein]-peptidylproline (omega=0). Functionally, PPIases accelerate the folding of proteins. It catalyzes the cis-trans isomerization of proline imidic peptide bonds in oligopeptides. The protein is Peptidyl-prolyl cis-trans isomerase D (CPR6) of Cryptococcus neoformans var. neoformans serotype D (strain B-3501A) (Filobasidiella neoformans).